A 234-amino-acid polypeptide reads, in one-letter code: Probable porphobilinogen deaminase (234 aa).

This sequence belongs to the HMBS family.

The catalysed reaction is 4 porphobilinogen + H2O = hydroxymethylbilane + 4 NH4(+). The protein operates within porphyrin-containing compound metabolism; protoporphyrin-IX biosynthesis; coproporphyrinogen-III from 5-aminolevulinate: step 2/4. Tetrapolymerization of the monopyrrole PBG into the hydroxymethylbilane pre-uroporphyrinogen in several discrete steps. This chain is Probable porphobilinogen deaminase (hemC), found in Chlamydia pneumoniae (Chlamydophila pneumoniae).